A 1559-amino-acid chain; its full sequence is Fatty acid synthase alpha subunit stcJ (1559 aa).

The region spanning 68-147 is the Carrier domain; that stretch reads DTPLTAIFII…AALGEVSLGP (80 aa). Ser106 is modified (O-(pantetheine 4'-phosphoryl)serine). The segment at 457–693 is ketoreductase (KR) domain; sequence NHTYLITGAG…SLLLTPQLAT (237 aa). The 455-residue stretch at 873–1327 folds into the Ketosynthase family 3 (KS3) domain; it reads REVFQEIVLE…QKEAQLVGVH (455 aa). The For beta-ketoacyl synthase activity role is filled by Cys1058. Residues 1105-1117 show a composition bias toward basic and acidic residues; that stretch reads VRDEQARGREPGE. The disordered stretch occupies residues 1105 to 1125; it reads VRDEQARGREPGEMSRPTAAS. Residues His1212 and His1253 each act as for beta-ketoacyl synthase activity in the active site. Asp1432 is a Mg(2+) binding site. Acetyl-CoA is bound by residues 1432-1434, 1480-1490, 1504-1506, and 1532-1534; these read DTV, EAVFKCLQTVS, RVQ, and LSY. Residue Ser1533 coordinates Mg(2+).

It belongs to the thiolase-like superfamily. Fungal fatty acid synthetase subunit alpha family. In terms of assembly, [Alpha(6)beta(6)] hexamers of two multifunctional subunits (alpha and beta).

The enzyme catalyses acetyl-CoA + n malonyl-CoA + 2n NADPH + 4n H(+) = a long-chain-acyl-CoA + n CoA + n CO2 + 2n NADP(+).. The catalysed reaction is a fatty acyl-[ACP] + malonyl-[ACP] + H(+) = a 3-oxoacyl-[ACP] + holo-[ACP] + CO2. It carries out the reaction a (3R)-hydroxyacyl-[ACP] + NADP(+) = a 3-oxoacyl-[ACP] + NADPH + H(+). It participates in mycotoxin biosynthesis; sterigmatocystin biosynthesis. In terms of biological role, fatty acid synthase alpha subunit; part of the gene cluster that mediates the biosynthesis of sterigmatocystin (ST), a polyketide-derived furanocoumarin which is part of the most toxic and carcinogenic compounds among the known mycotoxins. The first step in the biosynthesis of sterigmatocystin is the production of hexanoate by the fatty acid synthase (FAS) units stcJ and stcK. The polyketide backbone is assembled by the non-reducing polyketide synthase stcA by condensation of the starter hexanoyl-CoA and 7 malonyl-CoA extender units followed by cyclization and release of norsolorinic acid. Norsolorinic acid is the first stable intermediate in the biosynthesis of sterigmatocystin and is converted into averantin (AVN) by the ketoreductase stcE which reduces the hexanoate ketone to an alcohol. Averantin is then oxidized into 5'-hydroxyaverantin (HAVN) by the cytochrome P450 monooxygenase stcF. 5'-hydroxyaverantin is further converted to 5'-oxyaverantin (OAVN) by the 5'-hydroxyaverantin dehydrogenase stcG. The next step is the conversion of OAVN into averufin (AVF) which is catalyzed by a yet to be identified enzyme. The cytochrome P450 monooxygenase stcB and the flavin-binding monooxygenase stcW are both required for the conversion of averufin to 1-hydroxyversicolorone. The esterase stcI probably catalyzes the formation of versiconal hemiacetal acetate from 1-hydroxyversicolorone. The oxydoreductase stcN then probably catalyzes the biosynthetic step from versiconal to versicolorin B (VERB). The next step is performed by the versicolorin B desaturase stcL to produce versicolorin A (VERA). The ketoreductase stcU and the cytochrome P450 monooxygenase stcS are involved in the conversion of versicolorin A to demethylsterigmatocystin. The Baeyer-Villiger oxidas stcQ and the reductase stcR might be involved in the biosynthetic step from versicolorin A to demethylsterigmatocystin. The final step in the biosynthesis of sterigmatocystin is the methylation of demethylsterigmatocystin catalyzed by the methyltransferase stcP. This chain is Fatty acid synthase alpha subunit stcJ, found in Emericella nidulans (strain FGSC A4 / ATCC 38163 / CBS 112.46 / NRRL 194 / M139) (Aspergillus nidulans).